The sequence spans 576 residues: Sulfite reductase [NADPH] hemoprotein beta-component (576 aa).

[4Fe-4S] cluster contacts are provided by C435, C441, C480, and C484. C484 provides a ligand contact to siroheme.

This sequence belongs to the nitrite and sulfite reductase 4Fe-4S domain family. In terms of assembly, alpha(8)-beta(8). The alpha component is a flavoprotein, the beta component is a hemoprotein. Requires siroheme as cofactor. It depends on [4Fe-4S] cluster as a cofactor.

It catalyses the reaction hydrogen sulfide + 3 NADP(+) + 3 H2O = sulfite + 3 NADPH + 4 H(+). It participates in sulfur metabolism; hydrogen sulfide biosynthesis; hydrogen sulfide from sulfite (NADPH route): step 1/1. Its function is as follows. Component of the sulfite reductase complex that catalyzes the 6-electron reduction of sulfite to sulfide. This is one of several activities required for the biosynthesis of L-cysteine from sulfate. The sequence is that of Sulfite reductase [NADPH] hemoprotein beta-component from Yersinia pseudotuberculosis serotype IB (strain PB1/+).